The following is a 205-amino-acid chain: Probable 3'-5' exonuclease KapD (205 aa).

The Exonuclease domain maps to L6–F173. Mg(2+) contacts are provided by D10, E12, and D104. E12 acts as the Proton acceptor in catalysis. E12 contributes to the AMP binding site. The Proton acceptor role is filled by H160. H160 is an AMP binding site. Residue D165 participates in Mg(2+) binding.

It depends on Mg(2+) as a cofactor.

Functionally, specifically inhibits the KinA pathway to sporulation. This Bacillus subtilis (strain 168) protein is Probable 3'-5' exonuclease KapD (kapD).